The chain runs to 172 residues: Translation initiation factor IF-3 (172 aa).

It belongs to the IF-3 family. Monomer.

The protein localises to the cytoplasm. IF-3 binds to the 30S ribosomal subunit and shifts the equilibrium between 70S ribosomes and their 50S and 30S subunits in favor of the free subunits, thus enhancing the availability of 30S subunits on which protein synthesis initiation begins. This is Translation initiation factor IF-3 from Geobacter metallireducens (strain ATCC 53774 / DSM 7210 / GS-15).